Consider the following 436-residue polypeptide: POU domain, class 2, transcription factor 3 (436 aa).

Disordered stretches follow at residues 1–40, 140–186, and 256–278; these read MVNLESMHTDIKMSGDVADSTDARSTLSQVEPGNDRNGLD, QTGP…DEPS, and AESSPSDPSVSTPSSYPSLSEVF. The POU-specific domain maps to 183–257; sequence DEPSDLEELE…LLEKWLNDAE (75 aa). The span at 258–275 shows a compositional bias: low complexity; sequence SSPSDPSVSTPSSYPSLS. A DNA-binding region (homeobox) is located at residues 281 to 340; it reads KRKKRTSIETNIRLTLEKRFQDNPKPSSEEISMIAEQLSMEKEVVRVWFCNRRQKEKRIN. The segment at 363 to 421 is disordered; the sequence is LGPLSVPPVHSTMPGTVTSSCSPGNNSRPSSPGSGLHASSPTASQNNSKAAVNSASSFN. Low complexity-rich tracts occupy residues 381–397 and 405–421; these read SSCSPGNNSRPSSPGSG and ASQNNSKAAVNSASSFN.

Belongs to the POU transcription factor family. Class-2 subfamily. Interacts (via the POU domain) with POU2AF1 and POU2AF2 in a DNA-dependent manner; this interaction recruits POU2AF2 to chromatin and increases POU2F3 transactivation activity. Specifically expressed in epidermis and cultured keratinocytes.

It localises to the nucleus. In terms of biological role, transcription factor that binds to the octamer motif (5'-ATTTGCAT-3') and regulates cell type-specific differentiation pathways. Involved in the regulation of keratinocytes differentiation. The POU2F3-POU2AF2/POU2AF3 complex drives the expression of tuft-cell-specific genes, a rare chemosensory cells that coordinate immune and neural functions within mucosal epithelial tissues. This is POU domain, class 2, transcription factor 3 from Homo sapiens (Human).